The following is a 188-amino-acid chain: Large ribosomal subunit protein bL35m (188 aa).

It belongs to the bacterial ribosomal protein bL35 family. As to quaternary structure, component of the mitochondrial large ribosomal subunit (mt-LSU). Mature mammalian 55S mitochondrial ribosomes consist of a small (28S) and a large (39S) subunit. The 28S small subunit contains a 12S ribosomal RNA (12S mt-rRNA) and 30 different proteins. The 39S large subunit contains a 16S rRNA (16S mt-rRNA), a copy of mitochondrial valine transfer RNA (mt-tRNA(Val)), which plays an integral structural role, and 52 different proteins.

The protein localises to the mitochondrion. The protein is Large ribosomal subunit protein bL35m (MRPL35) of Homo sapiens (Human).